A 45-amino-acid polypeptide reads, in one-letter code: Cytochrome b559 subunit beta (45 aa).

Residues 20–36 traverse the membrane as a helical segment; the sequence is WLALHTLGIPTVFFLGA. His-24 contacts heme.

The protein belongs to the PsbE/PsbF family. In terms of assembly, heterodimer of an alpha subunit and a beta subunit. PSII is composed of 1 copy each of membrane proteins PsbA, PsbB, PsbC, PsbD, PsbE, PsbF, PsbH, PsbI, PsbJ, PsbK, PsbL, PsbM, PsbT, PsbX, PsbY, PsbZ, Psb30/Ycf12, peripheral proteins PsbO, CyanoQ (PsbQ), PsbU, PsbV and a large number of cofactors. It forms dimeric complexes. The cofactor is heme b.

The protein localises to the cellular thylakoid membrane. In terms of biological role, this b-type cytochrome is tightly associated with the reaction center of photosystem II (PSII). PSII is a light-driven water:plastoquinone oxidoreductase that uses light energy to abstract electrons from H(2)O, generating O(2) and a proton gradient subsequently used for ATP formation. It consists of a core antenna complex that captures photons, and an electron transfer chain that converts photonic excitation into a charge separation. The chain is Cytochrome b559 subunit beta from Synechococcus sp. (strain CC9902).